Reading from the N-terminus, the 90-residue chain is Small ribosomal subunit protein bS16 (90 aa).

The protein belongs to the bacterial ribosomal protein bS16 family.

In Oceanobacillus iheyensis (strain DSM 14371 / CIP 107618 / JCM 11309 / KCTC 3954 / HTE831), this protein is Small ribosomal subunit protein bS16.